The sequence spans 456 residues: Equilibrative nucleoside transporter 2 (456 aa).

A helical membrane pass occupies residues 13–33 (LVGISFFILGLGTLLPWNFFI). 2 N-linked (GlcNAc...) asparagine glycosylation sites follow: asparagine 48 and asparagine 57. Transmembrane regions (helical) follow at residues 70 to 90 (WVTLLSQLPLLLFTLLNSFLY), 99 to 119 (ILGSLLAILLLFALTAALVKV), 124 to 144 (GPFFSITMASVCFINSFSAVL), 162 to 182 (LFLSGQGLAGIFAALAMLLSM), and 193 to 213 (LGYFITPCVGILMSIVCYLSL). A glycan (N-linked (GlcNAc...) asparagine) is linked at asparagine 225. Position 252 is a phosphoserine (serine 252). Transmembrane regions (helical) follow at residues 291-311 (WLTALCLVLVFTVTLSVFPAI), 324-344 (WSQFFNPICCFLLFNIMDWLG), 360-380 (LLPLLVCLRFLFVPLFMLCHV), 386-406 (LPILFPQDAYFITFMLLFAVS), and 432-452 (ALMTFFLALGLSCGASLSFLF).

This sequence belongs to the SLC29A/ENT transporter (TC 2.A.57) family. Post-translationally, glycosylated. Highly expressed in skeletal muscle. Expressed in liver, lung, placenta, brain, heart, kidney and ovarian tissues. Expressed in testis at the blood-brain-barrier.

The protein resides in the apical cell membrane. It is found in the basolateral cell membrane. It catalyses the reaction inosine(in) = inosine(out). The enzyme catalyses adenosine(in) = adenosine(out). It carries out the reaction uridine(out) = uridine(in). The catalysed reaction is thymidine(in) = thymidine(out). It catalyses the reaction hypoxanthine(out) = hypoxanthine(in). The enzyme catalyses adenine(out) = adenine(in). It carries out the reaction cytidine(in) = cytidine(out). The catalysed reaction is thymine(out) = thymine(in). It catalyses the reaction uracil(in) = uracil(out). The enzyme catalyses guanine(out) = guanine(in). It carries out the reaction guanosine(in) = guanosine(out). In terms of biological role, bidirectional uniporter involved in the facilitative transport of nucleosides and nucleobases, and contributes to maintaining their cellular homeostasis. Functions as a Na(+)-independent, passive transporter. Involved in the transport of nucleosides such as inosine, adenosine, uridine, thymidine, cytidine and guanosine. Also able to transport purine nucleobases (hypoxanthine, adenine, guanine) and pyrimidine nucleobases (thymine, uracil). Involved in nucleoside transport at basolateral membrane of kidney cells, allowing liver absorption of nucleoside metabolites. Mediates apical nucleoside uptake into Sertoli cells, thereby regulating the transport of nucleosides in testis across the blood-testis-barrier. Mediates both the influx and efflux of hypoxanthine in skeletal muscle microvascular endothelial cells to control the amount of intracellular hypoxanthine available for xanthine oxidase-mediated ROS production. Non functional nucleoside transporter protein for adenosine or thymidine transport. Does not express on cell membrane. This Homo sapiens (Human) protein is Equilibrative nucleoside transporter 2.